The sequence spans 373 residues: Bifunctional enzyme IspD/IspF (373 aa).

A 2-C-methyl-D-erythritol 4-phosphate cytidylyltransferase region spans residues 1 to 212 (MPDITLILLG…PCIEAPSGKT (212 aa)). Residues 213 to 373 (LTGFGLDIHP…NLTYYNWKQK (161 aa)) form a 2-C-methyl-D-erythritol 2,4-cyclodiphosphate synthase region. A divalent metal cation is bound by residues Asp219 and His221. Residues 219–221 (DIH) and 245–246 (HS) contribute to the 4-CDP-2-C-methyl-D-erythritol 2-phosphate site. His253 contacts a divalent metal cation. Residues 267–269 (DIG), 272–276 (YPDTD), 343–346 (TTAE), Phe350, and Arg353 each bind 4-CDP-2-C-methyl-D-erythritol 2-phosphate.

This sequence in the N-terminal section; belongs to the IspD/TarI cytidylyltransferase family. IspD subfamily. In the C-terminal section; belongs to the IspF family. The cofactor is a divalent metal cation.

It catalyses the reaction 2-C-methyl-D-erythritol 4-phosphate + CTP + H(+) = 4-CDP-2-C-methyl-D-erythritol + diphosphate. It carries out the reaction 4-CDP-2-C-methyl-D-erythritol 2-phosphate = 2-C-methyl-D-erythritol 2,4-cyclic diphosphate + CMP. Its pathway is isoprenoid biosynthesis; isopentenyl diphosphate biosynthesis via DXP pathway; isopentenyl diphosphate from 1-deoxy-D-xylulose 5-phosphate: step 2/6. It participates in isoprenoid biosynthesis; isopentenyl diphosphate biosynthesis via DXP pathway; isopentenyl diphosphate from 1-deoxy-D-xylulose 5-phosphate: step 4/6. Its function is as follows. Bifunctional enzyme that catalyzes the formation of 4-diphosphocytidyl-2-C-methyl-D-erythritol from CTP and 2-C-methyl-D-erythritol 4-phosphate (MEP) (IspD), and catalyzes the conversion of 4-diphosphocytidyl-2-C-methyl-D-erythritol 2-phosphate (CDP-ME2P) to 2-C-methyl-D-erythritol 2,4-cyclodiphosphate (ME-CPP) with a corresponding release of cytidine 5-monophosphate (CMP) (IspF). This Sulfurovum sp. (strain NBC37-1) protein is Bifunctional enzyme IspD/IspF.